The sequence spans 953 residues: MDYKKSLNLPDTPFPMRGDLAKREPGWVAEWEETQVYQAIRAASRGRPRFVLHDGPPYANGDIHIGHAVNKILKDIIVKSRNMAGYDAHYVPGWDCHGMPIEIQIEKKYGKHLPVTEVQSKARAYALEQIDRQRKDFKRLGVLGDWHNPYLTMNFSNEADEIRVLGRILEKGYVFRGLKPVNWCFDCGSALAEAEVEYADRVDPAIDVAFPFTDRGALARAFGLDEVDAGAIVIWTTTPWTIPSNQALNVHPEIDYALVRVTPAPVHGPLLLLAQERVEPSLKAWGLEGEIIATAKGEALEGLRFRHPLAAAAQGYDRTSPIYLGDYVTLDTGTGVVHSAPAYGIEDFVSCKAHGLADSDILGPVMGDGKFVDSLPLFGGLSIWDANPRIVEALKLADSLMLVQKLSHSYMHCWRHKTPVIYRATSQWFAGMDVKPRDGGPSLRESALAGIDATAFYPAWGRARLHAMIANRPDWTLSRQRQWGVPMAFFVHKETGELHPRTVELLEQIAQRVEKGGIEAWQSLDPRELLGDEAELYEKNRDTLDVWFDSGSTHATVLGGKDGVLGGSHGAELAWPADLYLEGSDQHRGWFHSSLLTGCMLYGHPPYKGLLTHGFVVDGQGRKMSKSVGNVIAPQKVSDSLGAEILRLWVASTDYSGELSISDEILKRVVESYRRIRNTLRFLLANVADFDAVGQAVPYGELFEIDRYALAMTAQMQAEVQGHYERYDFHPAVSRLQTFCSEDLGAFYLDILKDRLYTTAAGSAARRSAQTALLDITQTLLKLMAPILSFTAEEAWKILAGSALAKQADAPRVTIFTEVYHALPPFADGEALTAKWTRLRAIRAEVQRKLEEVRSAGAIGSSLQAEVDLYANAADHDILASLGDDLRFVLIVSRATVHADADDLRIEIAASGHKKCERCWHWRPDVGQDADHPEICGRCVSNLFGAGEPRTRA.

The 'HIGH' region motif lies at 57-67 (PYANGDIHIGH). Glutamate 582 contributes to the L-isoleucyl-5'-AMP binding site. The short motif at 623 to 627 (KMSKS) is the 'KMSKS' region element. Lysine 626 is an ATP binding site. The Zn(2+) site is built by cysteine 916, cysteine 919, cysteine 936, and cysteine 939.

The protein belongs to the class-I aminoacyl-tRNA synthetase family. IleS type 1 subfamily. Monomer. Zn(2+) serves as cofactor.

Its subcellular location is the cytoplasm. It catalyses the reaction tRNA(Ile) + L-isoleucine + ATP = L-isoleucyl-tRNA(Ile) + AMP + diphosphate. Functionally, catalyzes the attachment of isoleucine to tRNA(Ile). As IleRS can inadvertently accommodate and process structurally similar amino acids such as valine, to avoid such errors it has two additional distinct tRNA(Ile)-dependent editing activities. One activity is designated as 'pretransfer' editing and involves the hydrolysis of activated Val-AMP. The other activity is designated 'posttransfer' editing and involves deacylation of mischarged Val-tRNA(Ile). In Bordetella pertussis (strain Tohama I / ATCC BAA-589 / NCTC 13251), this protein is Isoleucine--tRNA ligase.